The sequence spans 109 residues: Elongin-C (109 aa).

It belongs to the SKP1 family.

The protein localises to the nucleus. Functionally, SIII, also known as elongin, is a general transcription elongation factor that increases the RNA polymerase II transcription elongation past template-encoded arresting sites. Subunit A is transcriptionally active and its transcription activity is strongly enhanced by binding to the dimeric complex of the SIII regulatory subunits B and C (elongin BC complex). Its function is as follows. The elongin BC complex seems to be involved as an adapter protein in the proteasomal degradation of target proteins via different E3 ubiquitin ligase complexes. The sequence is that of Elongin-C (tceb1) from Dictyostelium discoideum (Social amoeba).